The following is a 265-amino-acid chain: Putative hydro-lyase PST_2764 (265 aa).

The protein belongs to the D-glutamate cyclase family.

The protein is Putative hydro-lyase PST_2764 of Stutzerimonas stutzeri (strain A1501) (Pseudomonas stutzeri).